A 231-amino-acid chain; its full sequence is Ion-translocating oxidoreductase complex subunit E (231 aa).

A run of 6 helical transmembrane segments spans residues 18–38 (ALVQ…ATNA), 39–59 (LGLG…ISTL), 63–83 (TPAE…VSAV), 86–106 (LINA…PLIV), 125–145 (ALSA…MFVL), and 182–202 (PFLL…MLAG).

Belongs to the NqrDE/RnfAE family. As to quaternary structure, the complex is composed of six subunits: RsxA, RsxB, RsxC, RsxD, RsxE and RsxG.

The protein resides in the cell inner membrane. Functionally, part of a membrane-bound complex that couples electron transfer with translocation of ions across the membrane. Required to maintain the reduced state of SoxR. The protein is Ion-translocating oxidoreductase complex subunit E of Escherichia coli (strain SE11).